Reading from the N-terminus, the 932-residue chain is Isoleucine--tRNA ligase (932 aa).

The short motif at 57 to 67 (PYANGDIHIGT) is the 'HIGH' region element. Position 559 (Glu559) interacts with L-isoleucyl-5'-AMP. The 'KMSKS' region signature appears at 600–604 (KMSKS). Lys603 lines the ATP pocket. Cys899, Cys902, Cys919, and Cys922 together coordinate Zn(2+).

This sequence belongs to the class-I aminoacyl-tRNA synthetase family. IleS type 1 subfamily. As to quaternary structure, monomer. It depends on Zn(2+) as a cofactor.

The protein resides in the cytoplasm. The catalysed reaction is tRNA(Ile) + L-isoleucine + ATP = L-isoleucyl-tRNA(Ile) + AMP + diphosphate. Functionally, catalyzes the attachment of isoleucine to tRNA(Ile). As IleRS can inadvertently accommodate and process structurally similar amino acids such as valine, to avoid such errors it has two additional distinct tRNA(Ile)-dependent editing activities. One activity is designated as 'pretransfer' editing and involves the hydrolysis of activated Val-AMP. The other activity is designated 'posttransfer' editing and involves deacylation of mischarged Val-tRNA(Ile). The sequence is that of Isoleucine--tRNA ligase from Caldanaerobacter subterraneus subsp. tengcongensis (strain DSM 15242 / JCM 11007 / NBRC 100824 / MB4) (Thermoanaerobacter tengcongensis).